Here is a 177-residue protein sequence, read N- to C-terminus: Adenine phosphoribosyltransferase (177 aa).

The protein belongs to the purine/pyrimidine phosphoribosyltransferase family. In terms of assembly, homodimer.

It localises to the cytoplasm. The catalysed reaction is AMP + diphosphate = 5-phospho-alpha-D-ribose 1-diphosphate + adenine. Its pathway is purine metabolism; AMP biosynthesis via salvage pathway; AMP from adenine: step 1/1. In terms of biological role, catalyzes a salvage reaction resulting in the formation of AMP, that is energically less costly than de novo synthesis. In Anaeromyxobacter sp. (strain Fw109-5), this protein is Adenine phosphoribosyltransferase.